Here is a 405-residue protein sequence, read N- to C-terminus: Acetylornithine aminotransferase 2 (405 aa).

Residues 105–106 (GT) and F138 contribute to the pyridoxal 5'-phosphate site. R141 provides a ligand contact to N(2)-acetyl-L-ornithine. 224–227 (DEVQ) provides a ligand contact to pyridoxal 5'-phosphate. K254 is subject to N6-(pyridoxal phosphate)lysine. Residue S282 coordinates N(2)-acetyl-L-ornithine. Pyridoxal 5'-phosphate is bound at residue T283.

It belongs to the class-III pyridoxal-phosphate-dependent aminotransferase family. ArgD subfamily. As to quaternary structure, homodimer. The cofactor is pyridoxal 5'-phosphate.

Its subcellular location is the cytoplasm. The enzyme catalyses N(2)-acetyl-L-ornithine + 2-oxoglutarate = N-acetyl-L-glutamate 5-semialdehyde + L-glutamate. The protein operates within amino-acid biosynthesis; L-arginine biosynthesis; N(2)-acetyl-L-ornithine from L-glutamate: step 4/4. The chain is Acetylornithine aminotransferase 2 from Caulobacter vibrioides (strain ATCC 19089 / CIP 103742 / CB 15) (Caulobacter crescentus).